We begin with the raw amino-acid sequence, 160 residues long: Transcription elongation factor GreA (160 aa).

A coiled-coil region spans residues 3–84; it reads SIVNDKILLT…SKAKIIKADL (82 aa).

Belongs to the GreA/GreB family.

Functionally, necessary for efficient RNA polymerase transcription elongation past template-encoded arresting sites. The arresting sites in DNA have the property of trapping a certain fraction of elongating RNA polymerases that pass through, resulting in locked ternary complexes. Cleavage of the nascent transcript by cleavage factors such as GreA or GreB allows the resumption of elongation from the new 3'terminus. GreA releases sequences of 2 to 3 nucleotides. In Mesomycoplasma hyopneumoniae (strain 7448) (Mycoplasma hyopneumoniae), this protein is Transcription elongation factor GreA.